The following is a 352-amino-acid chain: Protein RecA (352 aa).

67-74 (GPESSGKT) is an ATP binding site.

This sequence belongs to the RecA family.

It localises to the cytoplasm. Can catalyze the hydrolysis of ATP in the presence of single-stranded DNA, the ATP-dependent uptake of single-stranded DNA by duplex DNA, and the ATP-dependent hybridization of homologous single-stranded DNAs. It interacts with LexA causing its activation and leading to its autocatalytic cleavage. The sequence is that of Protein RecA from Enterobacter sp. (strain 638).